We begin with the raw amino-acid sequence, 68 residues long: MKVYDCCDKVRELYSLIGSGDQGYIPQAITCAVKTLNDIAADEALPKEARERAAFAAANLLISDFEDK.

It belongs to the UPF0253 family.

This is UPF0253 protein VF_0662 from Aliivibrio fischeri (strain ATCC 700601 / ES114) (Vibrio fischeri).